The primary structure comprises 394 residues: Protein-glutamate methylesterase/protein-glutamine glutaminase 2 (394 aa).

In terms of domain architecture, Response regulatory spans 4-121; it reads KVLVVDDSSF…ARNRDEAISL (118 aa). A 4-aspartylphosphate modification is found at aspartate 55. Residues 202–394 form the CheB-type methylesterase domain; it reads SGKKYQLMAI…AERILVEVGR (193 aa). Residues serine 214, histidine 241, and aspartate 337 contribute to the active site.

The protein belongs to the CheB family. Post-translationally, phosphorylated by CheA. Phosphorylation of the N-terminal regulatory domain activates the methylesterase activity.

The protein resides in the cytoplasm. The enzyme catalyses [protein]-L-glutamate 5-O-methyl ester + H2O = L-glutamyl-[protein] + methanol + H(+). It catalyses the reaction L-glutaminyl-[protein] + H2O = L-glutamyl-[protein] + NH4(+). Involved in chemotaxis. Part of a chemotaxis signal transduction system that modulates chemotaxis in response to various stimuli. Catalyzes the demethylation of specific methylglutamate residues introduced into the chemoreceptors (methyl-accepting chemotaxis proteins or MCP) by CheR. Also mediates the irreversible deamidation of specific glutamine residues to glutamic acid. The sequence is that of Protein-glutamate methylesterase/protein-glutamine glutaminase 2 from Photobacterium profundum (strain SS9).